The following is a 62-amino-acid chain: Calmodulin regulator protein PCP4 (62 aa).

Positions 1–39 are disordered; that stretch reads MSERQSAGATNGKDKTSGDNDGQKKVQEEFDIDMDAPET. Residues 12 to 28 are compositionally biased toward basic and acidic residues; that stretch reads GKDKTSGDNDGQKKVQE. The acidic; binds calcium and is required for modulating the calcium-binding kinetics of calmodulin stretch occupies residues 28 to 40; it reads EEFDIDMDAPETE. The region spanning 39 to 62 is the IQ domain; it reads TERAAVAIQSQFRKFQKKKAGSQS.

It belongs to the PCP4 family. As to quaternary structure, binds to both calcium-free and calcium-bound calmodulin. The affinity for the calcium-bound form is 50-fold greater.

Functions as a modulator of calcium-binding by calmodulin. Thereby, regulates calmodulin activity and the different processes it controls. For instance, may play a role in neuronal differentiation through activation of calmodulin-dependent kinase signaling pathways. This is Calmodulin regulator protein PCP4 from Mus musculus (Mouse).